The chain runs to 156 residues: UPF0225 protein PFLU_1319 (156 aa).

The protein belongs to the UPF0225 family.

The polypeptide is UPF0225 protein PFLU_1319 (Pseudomonas fluorescens (strain SBW25)).